Consider the following 419-residue polypeptide: Serine hydroxymethyltransferase (419 aa).

(6S)-5,6,7,8-tetrahydrofolate contacts are provided by residues Leu-118 and 122-124 (GHL). Residue Lys-226 is modified to N6-(pyridoxal phosphate)lysine. (6S)-5,6,7,8-tetrahydrofolate is bound at residue Glu-242.

Belongs to the SHMT family. As to quaternary structure, homodimer. Pyridoxal 5'-phosphate is required as a cofactor.

The protein localises to the cytoplasm. The catalysed reaction is (6R)-5,10-methylene-5,6,7,8-tetrahydrofolate + glycine + H2O = (6S)-5,6,7,8-tetrahydrofolate + L-serine. It participates in one-carbon metabolism; tetrahydrofolate interconversion. Its pathway is amino-acid biosynthesis; glycine biosynthesis; glycine from L-serine: step 1/1. In terms of biological role, catalyzes the reversible interconversion of serine and glycine with tetrahydrofolate (THF) serving as the one-carbon carrier. This reaction serves as the major source of one-carbon groups required for the biosynthesis of purines, thymidylate, methionine, and other important biomolecules. Also exhibits THF-independent aldolase activity toward beta-hydroxyamino acids, producing glycine and aldehydes, via a retro-aldol mechanism. This Metamycoplasma arthritidis (strain 158L3-1) (Mycoplasma arthritidis) protein is Serine hydroxymethyltransferase.